Here is a 427-residue protein sequence, read N- to C-terminus: Glutamate-1-semialdehyde 2,1-aminomutase (427 aa).

An N6-(pyridoxal phosphate)lysine modification is found at Lys265.

It belongs to the class-III pyridoxal-phosphate-dependent aminotransferase family. HemL subfamily. In terms of assembly, homodimer. Pyridoxal 5'-phosphate is required as a cofactor.

The protein resides in the cytoplasm. The enzyme catalyses (S)-4-amino-5-oxopentanoate = 5-aminolevulinate. It participates in porphyrin-containing compound metabolism; protoporphyrin-IX biosynthesis; 5-aminolevulinate from L-glutamyl-tRNA(Glu): step 2/2. The protein is Glutamate-1-semialdehyde 2,1-aminomutase of Photorhabdus laumondii subsp. laumondii (strain DSM 15139 / CIP 105565 / TT01) (Photorhabdus luminescens subsp. laumondii).